A 407-amino-acid chain; its full sequence is 1-deoxy-D-xylulose 5-phosphate reductoisomerase (407 aa).

6 residues coordinate NADPH: Thr-25, Gly-26, Ser-27, Ile-28, Asn-53, and Asn-136. Lys-137 lines the 1-deoxy-D-xylulose 5-phosphate pocket. Glu-138 is a binding site for NADPH. Asp-162 is a binding site for Mn(2+). Residues Ser-163, Glu-164, Ser-188, and His-211 each coordinate 1-deoxy-D-xylulose 5-phosphate. Glu-164 is a binding site for Mn(2+). Gly-217 serves as a coordination point for NADPH. The 1-deoxy-D-xylulose 5-phosphate site is built by Ser-224, Asn-229, Lys-230, and Glu-233. Mn(2+) is bound at residue Glu-233.

This sequence belongs to the DXR family. Mg(2+) is required as a cofactor. Requires Mn(2+) as cofactor.

It catalyses the reaction 2-C-methyl-D-erythritol 4-phosphate + NADP(+) = 1-deoxy-D-xylulose 5-phosphate + NADPH + H(+). The protein operates within isoprenoid biosynthesis; isopentenyl diphosphate biosynthesis via DXP pathway; isopentenyl diphosphate from 1-deoxy-D-xylulose 5-phosphate: step 1/6. In terms of biological role, catalyzes the NADPH-dependent rearrangement and reduction of 1-deoxy-D-xylulose-5-phosphate (DXP) to 2-C-methyl-D-erythritol 4-phosphate (MEP). This Nitrobacter winogradskyi (strain ATCC 25391 / DSM 10237 / CIP 104748 / NCIMB 11846 / Nb-255) protein is 1-deoxy-D-xylulose 5-phosphate reductoisomerase.